The sequence spans 308 residues: tRNA-cytidine(32) 2-sulfurtransferase (308 aa).

The short motif at 39 to 44 (SGGKDS) is the PP-loop motif element. [4Fe-4S] cluster contacts are provided by Cys-114, Cys-117, and Cys-205.

Belongs to the TtcA family. In terms of assembly, homodimer. Requires Mg(2+) as cofactor. [4Fe-4S] cluster serves as cofactor.

Its subcellular location is the cytoplasm. The catalysed reaction is cytidine(32) in tRNA + S-sulfanyl-L-cysteinyl-[cysteine desulfurase] + AH2 + ATP = 2-thiocytidine(32) in tRNA + L-cysteinyl-[cysteine desulfurase] + A + AMP + diphosphate + H(+). Its pathway is tRNA modification. In terms of biological role, catalyzes the ATP-dependent 2-thiolation of cytidine in position 32 of tRNA, to form 2-thiocytidine (s(2)C32). The sulfur atoms are provided by the cysteine/cysteine desulfurase (IscS) system. The sequence is that of tRNA-cytidine(32) 2-sulfurtransferase from Cupriavidus taiwanensis (strain DSM 17343 / BCRC 17206 / CCUG 44338 / CIP 107171 / LMG 19424 / R1) (Ralstonia taiwanensis (strain LMG 19424)).